The sequence spans 874 residues: Probable leucine--tRNA ligase, cytoplasmic (874 aa).

The 'HIGH' region motif lies at 36–46 (PYMNGRLHLGH). The 'KMSKS' region signature appears at 544–548 (KMSKS). An ATP-binding site is contributed by Lys-547.

Belongs to the class-I aminoacyl-tRNA synthetase family.

The protein localises to the cytoplasm. The catalysed reaction is tRNA(Leu) + L-leucine + ATP = L-leucyl-tRNA(Leu) + AMP + diphosphate. In Encephalitozoon cuniculi (strain GB-M1) (Microsporidian parasite), this protein is Probable leucine--tRNA ligase, cytoplasmic.